The primary structure comprises 1031 residues: Protein translocase subunit SecA (1031 aa).

Residues Gln-143, Gly-161–Thr-165, and Asp-662 each bind ATP. Zn(2+) is bound by residues Cys-1015, Cys-1017, Cys-1026, and Cys-1027.

This sequence belongs to the SecA family. Monomer and homodimer. Part of the essential Sec protein translocation apparatus which comprises SecA, SecYEG and auxiliary proteins SecDF. Other proteins may also be involved. Requires Zn(2+) as cofactor.

It localises to the cell inner membrane. The protein localises to the cytoplasm. It carries out the reaction ATP + H2O + cellular proteinSide 1 = ADP + phosphate + cellular proteinSide 2.. In terms of biological role, part of the Sec protein translocase complex. Interacts with the SecYEG preprotein conducting channel. Has a central role in coupling the hydrolysis of ATP to the transfer of proteins into and across the cell membrane, serving as an ATP-driven molecular motor driving the stepwise translocation of polypeptide chains across the membrane. The chain is Protein translocase subunit SecA from Chlorobaculum tepidum (strain ATCC 49652 / DSM 12025 / NBRC 103806 / TLS) (Chlorobium tepidum).